The primary structure comprises 833 residues: EF-hand domain-containing family member B (833 aa).

EF-hand domains are found at residues 561–596 (QKFDTLLAAFRHYDKKGDGMIDKDELQEACDQANLS) and 597–632 (LDDKLLDQLFDYCDVDNDGFINYLEFANFLNWKDKM). Residues Asp-574, Asp-578, Met-580, Glu-585, Asp-610, Asp-612, Asp-614, and Glu-621 each contribute to the Ca(2+) site.

As to quaternary structure, microtubule inner protein component of sperm flagellar doublet microtubules. Interacts with STIM1 and ORAI1; the interactions take place upon Ca(2+)-store depletion and dissociate through a Ca(2+)-dependent mechanism. Interaction with STIM1 inhibits STIM1 interaction with SARAF. Expressed in airway epithelial cells.

The protein resides in the cytoplasm. The protein localises to the cytoskeleton. Its subcellular location is the cilium axoneme. It localises to the flagellum axoneme. In terms of biological role, microtubule inner protein (MIP) part of the dynein-decorated doublet microtubules (DMTs) in cilia axoneme, which is required for motile cilia beating. Cytosolic sensor for calcium, modulates the interaction of STIM1 and ORAI1 upon store depletion and the activation of store-operated Ca(2+) entry (SOCE) and NFAT translocation from cytosol to nucleus. The protein is EF-hand domain-containing family member B of Homo sapiens (Human).